A 576-amino-acid chain; its full sequence is SNF1-like protein kinase ssp2 (576 aa).

In terms of domain architecture, Protein kinase spans 34–285 (YIIRETLGEG…IQEIRRDPWF (252 aa)). ATP contacts are provided by residues 40 to 48 (LGEGSFGKV) and K63. The Proton acceptor role is filled by D156. T189 carries the post-translational modification Phosphothreonine. The tract at residues 292–348 (YLRPMEEVQGSYADSRIVSKLGEAMGFSEDYIVEALRSDENNEVKEAYNLLHENQVI) is auto-inhibitory domain (AID). The 42-residue stretch at 304-345 (ADSRIVSKLGEAMGFSEDYIVEALRSDENNEVKEAYNLLHEN) folds into the UBA domain. S442 bears the Phosphoserine mark.

The protein belongs to the protein kinase superfamily. CAMK Ser/Thr protein kinase family. SNF1 subfamily. In terms of assembly, component of the AMP-activated protein kinase complex also known as the SNF1 kinase complex (Snf1c), a heterotrimeric complex composed of a catalytic subunit alpha and 2 regulatory subunits beta (amk2) and gamma (cbs2). Post-translationally, phosphorylation at Thr-189 by ssp1 is required for nuclear entry in nutritionally stressed cells.

It is found in the cytoplasm. The protein localises to the nucleus. The catalysed reaction is L-seryl-[protein] + ATP = O-phospho-L-seryl-[protein] + ADP + H(+). It catalyses the reaction L-threonyl-[protein] + ATP = O-phospho-L-threonyl-[protein] + ADP + H(+). Its function is as follows. Serine/threonine protein kinase essential for release from glucose repression via the phosphorylation of scr1 upon glucose deprivation. Catalytic subunit of the AMP-activated protein kinase complex also known as the SNF1 kinase complex (Snf1c), a central regulator of cellular energy homeostasis, which, in response to a fall in intracellular ATP levels, activates energy-producing pathways and inhibits energy-consuming processes. The complex phosphorylates histone H3 to form H3S10ph, which promotes H3K14ac formation, leading to transcriptional activation through TBP recruitment to the promoters. Regulates proper cell cycle exit and sexual differentiation. Also regulates ste11 levels under nitrogen deprivation. This chain is SNF1-like protein kinase ssp2, found in Schizosaccharomyces pombe (strain 972 / ATCC 24843) (Fission yeast).